The sequence spans 95 residues: uncharacterized protein (95 aa).

Residues 46–68 form a disordered region; it reads GDRGTNGRTEAEHDGIPHSRKKV.

This is an uncharacterized protein from Schizosaccharomyces pombe (strain 972 / ATCC 24843) (Fission yeast).